We begin with the raw amino-acid sequence, 599 residues long: Putative clathrin assembly protein At1g03050 (599 aa).

The 137-residue stretch at 26–162 (GRSASLSELD…DFRMQARHGK (137 aa)) folds into the ENTH domain. Disordered stretches follow at residues 332-382 (KQSK…PEEE) and 580-599 (QGHM…TPQY). Composition is skewed to acidic residues over residues 341–359 (ADED…EQED) and 373–382 (EEDDVKPEEE). Polar residues predominate over residues 585-599 (LRQNQNQPYSYTPQY).

It is found in the membrane. The protein resides in the clathrin-coated pit. It localises to the golgi apparatus. The protein localises to the cytoplasmic vesicle. Its subcellular location is the clathrin-coated vesicle. This Arabidopsis thaliana (Mouse-ear cress) protein is Putative clathrin assembly protein At1g03050.